Reading from the N-terminus, the 126-residue chain is MGFFSEFKEFAMKGNVVDLAVGVIIGAAFGKIVSSFIEDVITPLLLKPALDAANLSTIEQLTAFGGVKYGLFLSAVINFIIVAFVLFLIIKAMNHAKKKDVAPPPPPAGPTQEELLTQIRDLLKNK.

2 helical membrane-spanning segments follow: residues 17–37 and 70–90; these read VDLAVGVIIGAAFGKIVSSFI and GLFLSAVINFIIVAFVLFLII.

It belongs to the MscL family. Homopentamer.

It localises to the cell inner membrane. Channel that opens in response to stretch forces in the membrane lipid bilayer. May participate in the regulation of osmotic pressure changes within the cell. This is Large-conductance mechanosensitive channel from Flavobacterium johnsoniae (strain ATCC 17061 / DSM 2064 / JCM 8514 / BCRC 14874 / CCUG 350202 / NBRC 14942 / NCIMB 11054 / UW101) (Cytophaga johnsonae).